The sequence spans 373 residues: Chaperone protein DnaJ (373 aa).

The region spanning 4–68 (DYYEILGLTK…VKREQYNQFG (65 aa)) is the J domain. The segment at 142–224 (GKEIVEPLEK…CKGKTHTKTT (83 aa)) adopts a CR-type zinc-finger fold. C155, C158, C172, C175, C198, C201, C212, and C215 together coordinate Zn(2+). CXXCXGXG motif repeat units follow at residues 155-162 (CNTCNGSG), 172-179 (CTQCSGMG), 198-205 (CSKCNGIG), and 212-219 (CLICKGKT).

The protein belongs to the DnaJ family. Homodimer. Zn(2+) serves as cofactor.

It localises to the cytoplasm. In terms of biological role, participates actively in the response to hyperosmotic and heat shock by preventing the aggregation of stress-denatured proteins and by disaggregating proteins, also in an autonomous, DnaK-independent fashion. Unfolded proteins bind initially to DnaJ; upon interaction with the DnaJ-bound protein, DnaK hydrolyzes its bound ATP, resulting in the formation of a stable complex. GrpE releases ADP from DnaK; ATP binding to DnaK triggers the release of the substrate protein, thus completing the reaction cycle. Several rounds of ATP-dependent interactions between DnaJ, DnaK and GrpE are required for fully efficient folding. Also involved, together with DnaK and GrpE, in the DNA replication of plasmids through activation of initiation proteins. This Mycoplasma mobile (strain ATCC 43663 / 163K / NCTC 11711) (Mesomycoplasma mobile) protein is Chaperone protein DnaJ.